We begin with the raw amino-acid sequence, 236 residues long: Phosphoribosylaminoimidazole-succinocarboxamide synthase (236 aa).

It belongs to the SAICAR synthetase family.

The catalysed reaction is 5-amino-1-(5-phospho-D-ribosyl)imidazole-4-carboxylate + L-aspartate + ATP = (2S)-2-[5-amino-1-(5-phospho-beta-D-ribosyl)imidazole-4-carboxamido]succinate + ADP + phosphate + 2 H(+). It participates in purine metabolism; IMP biosynthesis via de novo pathway; 5-amino-1-(5-phospho-D-ribosyl)imidazole-4-carboxamide from 5-amino-1-(5-phospho-D-ribosyl)imidazole-4-carboxylate: step 1/2. The protein is Phosphoribosylaminoimidazole-succinocarboxamide synthase of Chlorobium limicola (strain DSM 245 / NBRC 103803 / 6330).